The primary structure comprises 149 residues: Large ribosomal subunit protein bL9 (149 aa).

Belongs to the bacterial ribosomal protein bL9 family.

Functionally, binds to the 23S rRNA. The chain is Large ribosomal subunit protein bL9 from Helicobacter pylori (strain J99 / ATCC 700824) (Campylobacter pylori J99).